Here is a 200-residue protein sequence, read N- to C-terminus: Rho-related protein racH (200 aa).

11–18 serves as a coordination point for GTP; that stretch reads GDMSVGKT. The Effector region motif lies at 33 to 41; the sequence is YVPTVFDNY. GTP-binding positions include 58–62 and 117–120; these read DTAGS and TKLD. A disordered region spans residues 178–200; that stretch reads EELAKSKKDSKKGDKDSKDCIIQ. Cysteine 197 carries the post-translational modification Cysteine methyl ester. Cysteine 197 carries S-geranylgeranyl cysteine lipidation. Residues 198–200 constitute a propeptide, removed in mature form; sequence IIQ.

The protein belongs to the small GTPase superfamily. Rho family.

It is found in the cell membrane. The polypeptide is Rho-related protein racH (racH) (Dictyostelium discoideum (Social amoeba)).